The primary structure comprises 186 residues: Elongation factor P (186 aa).

The protein belongs to the elongation factor P family.

Its subcellular location is the cytoplasm. Its pathway is protein biosynthesis; polypeptide chain elongation. Its function is as follows. Involved in peptide bond synthesis. Stimulates efficient translation and peptide-bond synthesis on native or reconstituted 70S ribosomes in vitro. Probably functions indirectly by altering the affinity of the ribosome for aminoacyl-tRNA, thus increasing their reactivity as acceptors for peptidyl transferase. This Shewanella baltica (strain OS223) protein is Elongation factor P.